A 145-amino-acid chain; its full sequence is Flagellar assembly factor FliW (145 aa).

It belongs to the FliW family. As to quaternary structure, interacts with translational regulator CsrA and flagellin(s).

The protein localises to the cytoplasm. Functionally, acts as an anti-CsrA protein, binds CsrA and prevents it from repressing translation of its target genes, one of which is flagellin. Binds to flagellin and participates in the assembly of the flagellum. This Clostridium kluyveri (strain NBRC 12016) protein is Flagellar assembly factor FliW.